A 668-amino-acid chain; its full sequence is DNA ligase (668 aa).

NAD(+) contacts are provided by residues 37–41 (DNVYD), 86–87 (SM), and glutamate 116. Lysine 118 (N6-AMP-lysine intermediate) is an active-site residue. NAD(+) is bound by residues arginine 139, glutamate 173, lysine 288, and lysine 312. Residues cysteine 406, cysteine 409, cysteine 424, and cysteine 429 each coordinate Zn(2+). Residues 591–668 (IPDNPFKDKT…TEEEAIAQIK (78 aa)) enclose the BRCT domain.

The protein belongs to the NAD-dependent DNA ligase family. LigA subfamily. It depends on Mg(2+) as a cofactor. The cofactor is Mn(2+).

It carries out the reaction NAD(+) + (deoxyribonucleotide)n-3'-hydroxyl + 5'-phospho-(deoxyribonucleotide)m = (deoxyribonucleotide)n+m + AMP + beta-nicotinamide D-nucleotide.. Functionally, DNA ligase that catalyzes the formation of phosphodiester linkages between 5'-phosphoryl and 3'-hydroxyl groups in double-stranded DNA using NAD as a coenzyme and as the energy source for the reaction. It is essential for DNA replication and repair of damaged DNA. The chain is DNA ligase from Lactobacillus acidophilus (strain ATCC 700396 / NCK56 / N2 / NCFM).